A 481-amino-acid polypeptide reads, in one-letter code: Flavonol 3-O-glucosyltransferase UGT71C1 (481 aa).

His-19 serves as the catalytic Proton acceptor. An anthocyanidin is bound at residue His-19. The active-site Charge relay is the Asp-131. Residues Thr-153, Ala-352, Gln-354, His-369, Trp-372, Asn-373, Ser-374, and Glu-377 each contribute to the UDP-alpha-D-glucose site. An anthocyanidin is bound at residue Ala-392. UDP-alpha-D-glucose is bound by residues Glu-393 and Gln-394.

Belongs to the UDP-glycosyltransferase family.

It carries out the reaction a flavonol + UDP-alpha-D-glucose = a flavonol 3-O-beta-D-glucoside + UDP + H(+). The catalysed reaction is a 7-O-hydroxy-flavonol + UDP-alpha-D-glucose = a flavonol 7-O-beta-D-glucoside + UDP + H(+). Functionally, possesses quercetin 7-O-glucosyltransferase and 3'-O-glucosyltransferase activities in vitro. Also active in vitro on benzoates and benzoate derivatives. Glucosylates other secondary metabolites in vitro like trans-resveratrol, curcumin, vanillin and etoposide. The sequence is that of Flavonol 3-O-glucosyltransferase UGT71C1 from Arabidopsis thaliana (Mouse-ear cress).